The chain runs to 297 residues: Glycerol-3-phosphate dehydrogenase [NAD(P)+] (297 aa).

Residues Trp-11, Arg-33, and Lys-79 each coordinate NADPH. Sn-glycerol 3-phosphate-binding residues include Lys-79, Gly-107, and Ser-109. Ala-111 provides a ligand contact to NADPH. Residues Lys-161, Asp-214, Ser-224, Arg-225, and Asn-226 each coordinate sn-glycerol 3-phosphate. Lys-161 serves as the catalytic Proton acceptor. Arg-225 provides a ligand contact to NADPH. Residues Val-249 and Glu-251 each contribute to the NADPH site.

It belongs to the NAD-dependent glycerol-3-phosphate dehydrogenase family.

It localises to the cytoplasm. It carries out the reaction sn-glycerol 3-phosphate + NAD(+) = dihydroxyacetone phosphate + NADH + H(+). It catalyses the reaction sn-glycerol 3-phosphate + NADP(+) = dihydroxyacetone phosphate + NADPH + H(+). Its pathway is membrane lipid metabolism; glycerophospholipid metabolism. In terms of biological role, catalyzes the reduction of the glycolytic intermediate dihydroxyacetone phosphate (DHAP) to sn-glycerol 3-phosphate (G3P), the key precursor for phospholipid synthesis. The sequence is that of Glycerol-3-phosphate dehydrogenase [NAD(P)+] from Campylobacter jejuni subsp. jejuni serotype O:23/36 (strain 81-176).